We begin with the raw amino-acid sequence, 570 residues long: Sulfite reductase [NADPH] hemoprotein beta-component (570 aa).

Residues Cys434, Cys440, Cys479, and Cys483 each coordinate [4Fe-4S] cluster. Position 483 (Cys483) interacts with siroheme.

Belongs to the nitrite and sulfite reductase 4Fe-4S domain family. As to quaternary structure, alpha(8)-beta(8). The alpha component is a flavoprotein, the beta component is a hemoprotein. Siroheme serves as cofactor. It depends on [4Fe-4S] cluster as a cofactor.

It carries out the reaction hydrogen sulfide + 3 NADP(+) + 3 H2O = sulfite + 3 NADPH + 4 H(+). The protein operates within sulfur metabolism; hydrogen sulfide biosynthesis; hydrogen sulfide from sulfite (NADPH route): step 1/1. Component of the sulfite reductase complex that catalyzes the 6-electron reduction of sulfite to sulfide. This is one of several activities required for the biosynthesis of L-cysteine from sulfate. This is Sulfite reductase [NADPH] hemoprotein beta-component from Zymomonas mobilis subsp. mobilis (strain ATCC 31821 / ZM4 / CP4).